The following is a 66-amino-acid chain: Large ribosomal subunit protein bL35 (66 aa).

Belongs to the bacterial ribosomal protein bL35 family.

This Thermomicrobium roseum (strain ATCC 27502 / DSM 5159 / P-2) protein is Large ribosomal subunit protein bL35.